The following is a 609-amino-acid chain: Glutamine--fructose-6-phosphate aminotransferase [isomerizing] (609 aa).

The active-site Nucleophile; for GATase activity is C2. The Glutamine amidotransferase type-2 domain maps to C2–G219. SIS domains lie at I280–T426 and W458–P599. Residue K604 is the For Fru-6P isomerization activity of the active site.

As to quaternary structure, homodimer.

The protein resides in the cytoplasm. The catalysed reaction is D-fructose 6-phosphate + L-glutamine = D-glucosamine 6-phosphate + L-glutamate. Its function is as follows. Catalyzes the first step in hexosamine metabolism, converting fructose-6P into glucosamine-6P using glutamine as a nitrogen source. The chain is Glutamine--fructose-6-phosphate aminotransferase [isomerizing] from Chlamydia abortus (strain DSM 27085 / S26/3) (Chlamydophila abortus).